Reading from the N-terminus, the 38-residue chain is Cytochrome b6-f complex subunit 5 (38 aa).

The helical transmembrane segment at 5–25 (LLLGIVLGLIPVTLAGLFVAA) threads the bilayer.

Belongs to the PetG family. As to quaternary structure, the 4 large subunits of the cytochrome b6-f complex are cytochrome b6, subunit IV (17 kDa polypeptide, PetD), cytochrome f and the Rieske protein, while the 4 small subunits are PetG, PetL, PetM and PetN. The complex functions as a dimer.

Its subcellular location is the cellular thylakoid membrane. In terms of biological role, component of the cytochrome b6-f complex, which mediates electron transfer between photosystem II (PSII) and photosystem I (PSI), cyclic electron flow around PSI, and state transitions. PetG is required for either the stability or assembly of the cytochrome b6-f complex. The protein is Cytochrome b6-f complex subunit 5 of Picosynechococcus sp. (strain ATCC 27264 / PCC 7002 / PR-6) (Agmenellum quadruplicatum).